A 174-amino-acid chain; its full sequence is ATP synthase subunit b, organellar chromatophore (174 aa).

A helical membrane pass occupies residues 26–46 (LINLIIVIGVLFTFLRGFLGE).

Belongs to the ATPase B chain family. As to quaternary structure, F-type ATPases have 2 components, F(1) - the catalytic core - and F(0) - the membrane proton channel. F(1) has five subunits: alpha(3), beta(3), gamma(1), delta(1), epsilon(1). F(0) has four main subunits: a(1), b(1), b'(1) and c(10-14). The alpha and beta chains form an alternating ring which encloses part of the gamma chain. F(1) is attached to F(0) by a central stalk formed by the gamma and epsilon chains, while a peripheral stalk is formed by the delta, b and b' chains.

It localises to the plastid. The protein resides in the organellar chromatophore thylakoid membrane. Its function is as follows. F(1)F(0) ATP synthase produces ATP from ADP in the presence of a proton or sodium gradient. F-type ATPases consist of two structural domains, F(1) containing the extramembraneous catalytic core and F(0) containing the membrane proton channel, linked together by a central stalk and a peripheral stalk. During catalysis, ATP synthesis in the catalytic domain of F(1) is coupled via a rotary mechanism of the central stalk subunits to proton translocation. Functionally, component of the F(0) channel, it forms part of the peripheral stalk, linking F(1) to F(0). The sequence is that of ATP synthase subunit b, organellar chromatophore from Paulinella chromatophora.